Reading from the N-terminus, the 512-residue chain is Monocarboxylate transporter 14 (512 aa).

Residues 1-29 lie on the Cytoplasmic side of the membrane; it reads MYTSHEDIGYDLEDDRKAKNKKTLKPHPD. A run of 12 helical transmembrane segments spans residues 30–50, 76–96, 105–125, 129–149, 161–181, 193–211, 317–337, 355–375, 381–401, 410–430, 446–466, and 476–496; these read IDGGWAWMMVLSSFFVHILIM, WVSSLSMGITLIVGPFIGLFI, AIIGGLVNSLGWVLSAYAANV, FITFGVAAGLGSGMAYLPAVV, LAQGLSTTGTGFGTFLMTVLL, AMFIQGALSLNLCVCGALM, MFVAFIFWALFAYSSFVIPFI, FPLTSIIAILHIFGKVILGAV, ISVWNVFLIANFTLVLSIFLL, LAVICALIGFSSGYFSLMPVV, IIICANGISALLGPPFAGWIF, and FYICGLLYMVGILFLLIQPCI. The Cytoplasmic segment spans residues 497–512; that stretch reads QMIDQSRRKCIEGAHV.

The protein belongs to the major facilitator superfamily. Monocarboxylate porter (TC 2.A.1.13) family.

Its subcellular location is the cell membrane. In terms of biological role, proton-linked monocarboxylate transporter. May catalyze the transport of monocarboxylates across the plasma membrane. This Mus musculus (Mouse) protein is Monocarboxylate transporter 14 (Slc16a14).